The chain runs to 238 residues: Small ribosomal subunit protein uS3 (238 aa).

Residues 39-108 (IRKFVKKKLF…NVAVNVIEVK (70 aa)) form the KH type-2 domain.

This sequence belongs to the universal ribosomal protein uS3 family. In terms of assembly, part of the 30S ribosomal subunit. Forms a tight complex with proteins S10 and S14.

In terms of biological role, binds the lower part of the 30S subunit head. Binds mRNA in the 70S ribosome, positioning it for translation. This chain is Small ribosomal subunit protein uS3, found in Alkaliphilus oremlandii (strain OhILAs) (Clostridium oremlandii (strain OhILAs)).